The sequence spans 369 residues: Putative gustatory receptor 39b (369 aa).

The Cytoplasmic segment spans residues methionine 1–lysine 32. A helical transmembrane segment spans residues valine 33–proline 53. The Extracellular segment spans residues glutamine 54–phenylalanine 59. The helical transmembrane segment at leucine 60–isoleucine 80 threads the bilayer. Residues leucine 81 to lysine 122 are Cytoplasmic-facing. Residues isoleucine 123–serine 143 traverse the membrane as a helical segment. Over glycine 144–leucine 147 the chain is Extracellular. Residues tyrosine 148–leucine 168 form a helical membrane-spanning segment. Over asparagine 169–tyrosine 224 the chain is Cytoplasmic. A helical membrane pass occupies residues leucine 225–phenylalanine 245. At serine 246–tyrosine 265 the chain is on the extracellular side. The chain crosses the membrane as a helical span at residues lysine 266 to cysteine 286. The Cytoplasmic portion of the chain corresponds to arginine 287 to leucine 348. The chain crosses the membrane as a helical span at residues leucine 349–serine 368. Valine 369 is a topological domain (extracellular).

It belongs to the insect chemoreceptor superfamily. Gustatory receptor (GR) family. Gr2a subfamily. As to expression, expressed in the adult labellar chemosensory neurons and in abdominal ganglions. In larvae, is expressed in neurons of the dorsal and posterior pharyngeal sense organs.

The protein localises to the cell membrane. In terms of biological role, probable gustatory receptor which mediates acceptance or avoidance behavior, depending on its substrates. Has also atypical sensory function in organ not limited to conventional taste sensing like abdominal ganglions. The chain is Putative gustatory receptor 39b (Gr39b) from Drosophila melanogaster (Fruit fly).